We begin with the raw amino-acid sequence, 215 residues long: MVVLVEQKYQELLNMLPSVSRETMENLIQFESLIIQWNAHINLISAATVPFLWTRHILDSAQIYPLYSQCLHWCDLGSGGGFPAIVIAIFLKEKQKGHIDLIESNGKKVAFLRTVIAQLNLPATVYHCRIEDVYQKINAPEIITARGLASLNTLLQLTFPWLKQKTIALLQKGRDYAIEVENAYANWRFNLLKHQSKIDENSVILEISHVRSCQG.

S-adenosyl-L-methionine is bound by residues glycine 77, phenylalanine 82, 130 to 131, and arginine 146; that span reads IE.

The protein belongs to the methyltransferase superfamily. RNA methyltransferase RsmG family.

It localises to the cytoplasm. It carries out the reaction guanosine(527) in 16S rRNA + S-adenosyl-L-methionine = N(7)-methylguanosine(527) in 16S rRNA + S-adenosyl-L-homocysteine. In terms of biological role, specifically methylates the N7 position of guanine in position 527 of 16S rRNA. In Bartonella bacilliformis (strain ATCC 35685 / KC583 / Herrer 020/F12,63), this protein is Ribosomal RNA small subunit methyltransferase G.